A 153-amino-acid chain; its full sequence is Nucleoside diphosphate kinase (153 aa).

6 residues coordinate ATP: Lys11, Phe59, Arg87, Thr93, Arg104, and Asn114. His117 functions as the Pros-phosphohistidine intermediate in the catalytic mechanism.

Belongs to the NDK family. The cofactor is Mg(2+).

The catalysed reaction is a 2'-deoxyribonucleoside 5'-diphosphate + ATP = a 2'-deoxyribonucleoside 5'-triphosphate + ADP. The enzyme catalyses a ribonucleoside 5'-diphosphate + ATP = a ribonucleoside 5'-triphosphate + ADP. In terms of biological role, major role in the synthesis of nucleoside triphosphates other than ATP. The ATP gamma phosphate is transferred to the NDP beta phosphate via a ping-pong mechanism, using a phosphorylated active-site intermediate. The sequence is that of Nucleoside diphosphate kinase (swoH) from Emericella nidulans (strain FGSC A4 / ATCC 38163 / CBS 112.46 / NRRL 194 / M139) (Aspergillus nidulans).